A 20-amino-acid polypeptide reads, in one-letter code: Dahlein-5.3 (20 aa).

Expressed by the skin dorsal glands.

It is found in the secreted. Functionally, has no antimicrobial activity. Strongly inhibits the formation of NO by neuronal nitric oxide synthase at micromolar concentrations. In Ranoidea dahlii (Dahl's aquatic frog), this protein is Dahlein-5.3.